A 259-amino-acid polypeptide reads, in one-letter code: Phosphatidylglycerol--prolipoprotein diacylglyceryl transferase (259 aa).

Helical transmembrane passes span 9–29 (IIFS…VIGI), 55–75 (FITY…VLLY), 92–112 (EGGM…YLFC), and 117–137 (INFL…LFLG). R138 contributes to the a 1,2-diacyl-sn-glycero-3-phospho-(1'-sn-glycerol) binding site. 3 consecutive transmembrane segments (helical) span residues 172-192 (QLYE…YTTF), 201-221 (GLNS…IEIF), and 228-248 (IGFI…MLLL).

It belongs to the Lgt family.

Its subcellular location is the cell inner membrane. The catalysed reaction is L-cysteinyl-[prolipoprotein] + a 1,2-diacyl-sn-glycero-3-phospho-(1'-sn-glycerol) = an S-1,2-diacyl-sn-glyceryl-L-cysteinyl-[prolipoprotein] + sn-glycerol 1-phosphate + H(+). Its pathway is protein modification; lipoprotein biosynthesis (diacylglyceryl transfer). Functionally, catalyzes the transfer of the diacylglyceryl group from phosphatidylglycerol to the sulfhydryl group of the N-terminal cysteine of a prolipoprotein, the first step in the formation of mature lipoproteins. This is Phosphatidylglycerol--prolipoprotein diacylglyceryl transferase from Rickettsia africae (strain ESF-5).